The chain runs to 867 residues: Protein translocase subunit SecA (867 aa).

Residues Q85, 103–107, and D491 contribute to the ATP site; that span reads GEGKT.

This sequence belongs to the SecA family. Monomer and homodimer. Part of the essential Sec protein translocation apparatus which comprises SecA, SecYEG and auxiliary proteins SecDF. Other proteins may also be involved.

Its subcellular location is the cell membrane. The protein resides in the cytoplasm. The catalysed reaction is ATP + H2O + cellular proteinSide 1 = ADP + phosphate + cellular proteinSide 2.. In terms of biological role, part of the Sec protein translocase complex. Interacts with the SecYEG preprotein conducting channel. Has a central role in coupling the hydrolysis of ATP to the transfer of proteins into and across the cell membrane, serving as an ATP-driven molecular motor driving the stepwise translocation of polypeptide chains across the membrane. This chain is Protein translocase subunit SecA, found in Mycoplasmopsis pulmonis (strain UAB CTIP) (Mycoplasma pulmonis).